The primary structure comprises 240 residues: tRNA (guanine-N(1)-)-methyltransferase (240 aa).

Residues Gly-112 and 132 to 137 (LGDFVL) contribute to the S-adenosyl-L-methionine site.

Belongs to the RNA methyltransferase TrmD family. Homodimer.

Its subcellular location is the cytoplasm. The catalysed reaction is guanosine(37) in tRNA + S-adenosyl-L-methionine = N(1)-methylguanosine(37) in tRNA + S-adenosyl-L-homocysteine + H(+). Functionally, specifically methylates guanosine-37 in various tRNAs. The protein is tRNA (guanine-N(1)-)-methyltransferase of Cyanothece sp. (strain PCC 7425 / ATCC 29141).